Here is a 223-residue protein sequence, read N- to C-terminus: MKRN2 opposite strand protein (223 aa).

The protein is MKRN2 opposite strand protein (MKRN2OS) of Homo sapiens (Human).